A 426-amino-acid chain; its full sequence is Endothelin-1 receptor (426 aa).

The N-terminal stretch at Met1 to Gly20 is a signal peptide. The Extracellular segment spans residues Asp21–Lys79. 2 N-linked (GlcNAc...) asparagine glycosylation sites follow: Asn29 and Asn61. A helical membrane pass occupies residues Tyr80–Leu101. The Cytoplasmic portion of the chain corresponds to Arg102–Arg111. The helical transmembrane segment at Asn112–Ile131 threads the bilayer. Residues Asp132–Lys158 lie on the Extracellular side of the membrane. Cys157 and Cys238 are oxidised to a cystine. A helical transmembrane segment spans residues Leu159 to Val180. The Cytoplasmic segment spans residues Asp181–Glu204. Residues Ile205–Phe228 traverse the membrane as a helical segment. The Extracellular portion of the chain corresponds to Glu229 to Asp255. The N-linked (GlcNAc...) asparagine glycan is linked to Asn241. A helical transmembrane segment spans residues Trp256–Met277. The Cytoplasmic portion of the chain corresponds to Thr278–Lys305. The helical transmembrane segment at Thr306–Leu327 threads the bilayer. Residues Lys328 to Leu346 lie on the Extracellular side of the membrane. The chain crosses the membrane as a helical span at residues Arg347–Val371. The Cytoplasmic portion of the chain corresponds to Ser372–Asn426. Ser424 carries the post-translational modification Phosphoserine.

This sequence belongs to the G-protein coupled receptor 1 family. Endothelin receptor subfamily. EDNRA sub-subfamily. Interacts with HDAC7 and KAT5.

It is found in the cell membrane. In terms of biological role, receptor for endothelin-1. Mediates its action by association with G proteins that activate a phosphatidylinositol-calcium second messenger system. The rank order of binding affinities for ET-A is: ET1 &gt; ET2 &gt;&gt; ET3. The protein is Endothelin-1 receptor of Canis lupus familiaris (Dog).